The primary structure comprises 270 residues: 3-methyl-2-oxobutanoate hydroxymethyltransferase (270 aa).

Positions 50 and 89 each coordinate Mg(2+). Residues 50-51, aspartate 89, and lysine 118 each bind 3-methyl-2-oxobutanoate; that span reads DS. Glutamate 120 serves as a coordination point for Mg(2+). The Proton acceptor role is filled by glutamate 187.

Belongs to the PanB family. As to quaternary structure, homodecamer; pentamer of dimers. The cofactor is Mg(2+).

Its subcellular location is the cytoplasm. It catalyses the reaction 3-methyl-2-oxobutanoate + (6R)-5,10-methylene-5,6,7,8-tetrahydrofolate + H2O = 2-dehydropantoate + (6S)-5,6,7,8-tetrahydrofolate. It functions in the pathway cofactor biosynthesis; (R)-pantothenate biosynthesis; (R)-pantoate from 3-methyl-2-oxobutanoate: step 1/2. Functionally, catalyzes the reversible reaction in which hydroxymethyl group from 5,10-methylenetetrahydrofolate is transferred onto alpha-ketoisovalerate to form ketopantoate. The chain is 3-methyl-2-oxobutanoate hydroxymethyltransferase from Helicobacter acinonychis (strain Sheeba).